Consider the following 172-residue polypeptide: 6,7-dimethyl-8-ribityllumazine synthase (172 aa).

Residues Phe-24, 58-60 (ALE), and 82-84 (AVI) each bind 5-amino-6-(D-ribitylamino)uracil. 87-88 (ET) contributes to the (2S)-2-hydroxy-3-oxobutyl phosphate binding site. Residue His-90 is the Proton donor of the active site. Asn-115 is a 5-amino-6-(D-ribitylamino)uracil binding site. Arg-129 is a binding site for (2S)-2-hydroxy-3-oxobutyl phosphate. Positions 150–172 (ALEQLDGDEDDEGEGEDDEEERA) are disordered. The segment covering 154-172 (LDGDEDDEGEGEDDEEERA) has biased composition (acidic residues).

The protein belongs to the DMRL synthase family.

The enzyme catalyses (2S)-2-hydroxy-3-oxobutyl phosphate + 5-amino-6-(D-ribitylamino)uracil = 6,7-dimethyl-8-(1-D-ribityl)lumazine + phosphate + 2 H2O + H(+). The protein operates within cofactor biosynthesis; riboflavin biosynthesis; riboflavin from 2-hydroxy-3-oxobutyl phosphate and 5-amino-6-(D-ribitylamino)uracil: step 1/2. Functionally, catalyzes the formation of 6,7-dimethyl-8-ribityllumazine by condensation of 5-amino-6-(D-ribitylamino)uracil with 3,4-dihydroxy-2-butanone 4-phosphate. This is the penultimate step in the biosynthesis of riboflavin. This Paraburkholderia phymatum (strain DSM 17167 / CIP 108236 / LMG 21445 / STM815) (Burkholderia phymatum) protein is 6,7-dimethyl-8-ribityllumazine synthase.